We begin with the raw amino-acid sequence, 85 residues long: Contulakin-Lt1 (85 aa).

The N-terminal stretch at 1–22 (MRTAYWVMVMMMVGITAPLSEG) is a signal peptide. Positions 23 to 60 (RKLNDAIRGLVADYLTPQLLQSLVSAPYPEFQLDDPNL) are excised as a propeptide. The cysteines at positions 65 and 70 are disulfide-linked. The propeptide occupies 76–85 (RRRDLKKRNK).

It belongs to the conotoxin C superfamily. In terms of tissue distribution, expressed by the venom duct.

It localises to the secreted. Functionally, acts as an agonist of neurotensin receptors. It binds to human neurotensin type 1 receptor (NTSR1), rat neurotensin types 1 and 2 receptors (NTSR1/NTSR2) and mouse neurotensin type 3 receptor (SORT1). This Conus litteratus (Lettered cone) protein is Contulakin-Lt1.